A 752-amino-acid chain; its full sequence is Peptidyl-prolyl cis-trans isomerase G (752 aa).

A PPIase cyclophilin-type domain is found at 11 to 176; it reads FFDIAINNQP…AEVRILSCGE (166 aa). The span at 182 to 193 shows a compositional bias: basic residues; sequence KVKKEEKKRHKS. The disordered stretch occupies residues 182–752; the sequence is KVKKEEKKRH…SPGTDEDKSG (571 aa). Positions 194 to 214 are enriched in low complexity; it reads SSSSSSSDSDSSSDSQSSSES. Residues 226–251 show a composition bias toward basic residues; the sequence is RKRKKKHRKNSRKHKKEKKKRKKSKK. Phosphoserine is present on residues S252, S254, S255, S257, and S288. The segment covering 290-308 has biased composition (basic and acidic residues); sequence PKADDKERKNREREREREC. S313 carries the post-translational modification Phosphoserine. Positions 327-345 are enriched in basic residues; it reads SGRKIKGRGPRRYRTPSRS. Composition is skewed to basic and acidic residues over residues 346–366 and 377–447; these read RSRD…EMQR and RWIK…DKYN. S354 bears the Phosphoserine mark. Phosphothreonine is present on T356. Phosphoserine is present on S384. K390 participates in a covalent cross-link: Glycyl lysine isopeptide (Lys-Gly) (interchain with G-Cter in SUMO2). Phosphoserine occurs at positions 395, 411, and 413. The span at 448–461 shows a compositional bias: basic residues; it reads KNKVKKRGKSKSRS. Composition is skewed to basic and acidic residues over residues 462–552 and 577–598; these read KSKE…DLTK and RSHD…QEYR. The segment covering 599–625 has biased composition (basic residues); that stretch reads RRGRSRSRDRRTPGRSRSKDRRRRRRD. Positions 626 to 684 are enriched in basic and acidic residues; the sequence is SRSSEREESQSRNKDKYRSQESKSSHRKENSEGEKRTYSKSRDHNSSSNNREKKADREQ. Residues S685 and S688 each carry the phosphoserine modification. Residues 685 to 705 show a composition bias toward polar residues; sequence SPVSKTKQSSQDNEVKSSTLK. Residue K691 forms a Glycyl lysine isopeptide (Lys-Gly) (interchain with G-Cter in SUMO2) linkage. A phosphoserine mark is found at S694, S742, and S743. The segment covering 706–752 has biased composition (basic and acidic residues); the sequence is NQEDEKTRSPVEKENQKSKGQENDHVHDKNKKCDHESSPGTDEDKSG. Residue T746 is modified to Phosphothreonine. S751 is modified (phosphoserine).

Interacts with CLK1, PNN and with the phosphorylated C-terminal domain of RNA polymerase II.

The protein resides in the nucleus matrix. It localises to the nucleus speckle. The enzyme catalyses [protein]-peptidylproline (omega=180) = [protein]-peptidylproline (omega=0). Its activity is regulated as follows. Inhibited by cyclosporin A (CsA). In terms of biological role, PPIase that catalyzes the cis-trans isomerization of proline imidic peptide bonds in oligopeptides and may therefore assist protein folding. May be implicated in the folding, transport, and assembly of proteins. May play an important role in the regulation of pre-mRNA splicing. This is Peptidyl-prolyl cis-trans isomerase G (Ppig) from Mus musculus (Mouse).